The following is a 401-amino-acid chain: Bone morphogenetic protein 4 (401 aa).

An N-terminal signal peptide occupies residues 1 to 19 (MIPGNRMLMVILLSQVLLG). A propeptide spanning residues 20-287 (GTNYASLIPD…GHALTRRSKR (268 aa)) is cleaved from the precursor. N-linked (GlcNAc...) asparagine glycans are attached at residues N141, N204, and N238. Residues 279–299 (HALTRRSKRSPKQQRPRKKNK) are disordered. Over residues 280-299 (ALTRRSKRSPKQQRPRKKNK) the composition is skewed to basic residues. Cystine bridges form between C301–C366, C330–C398, and C334–C400. Residues N343 and N358 are each glycosylated (N-linked (GlcNAc...) asparagine).

Belongs to the TGF-beta family. Homodimer; disulfide-linked. Forms heterodimers with the TGF-beta family member derriere. Part of a complex consisting of twsg1 and chrd. Interacts with tsku.

The protein resides in the secreted. It is found in the extracellular space. Its subcellular location is the extracellular matrix. Posterior-ventralizing factor in Xenopus mesoderm induction. Induces posteroventral mesoderm and counteracts dorsalizing signals such as activin. This is Bone morphogenetic protein 4 (bmp4) from Xenopus laevis (African clawed frog).